A 486-amino-acid polypeptide reads, in one-letter code: UDP-N-acetylmuramoyl-L-alanyl-D-glutamate--2,6-diaminopimelate ligase (486 aa).

Residue Ser-30 coordinates UDP-N-acetyl-alpha-D-muramoyl-L-alanyl-D-glutamate. Gly-112–Thr-118 contacts ATP. UDP-N-acetyl-alpha-D-muramoyl-L-alanyl-D-glutamate-binding positions include Thr-154–Thr-155, Ser-181, Gln-187, and Arg-189. Lys-221 is modified (N6-carboxylysine). Residues Arg-378, Asp-402 to Arg-405, Gly-455, and Glu-459 each bind meso-2,6-diaminopimelate. A Meso-diaminopimelate recognition motif motif is present at residues Asp-402–Arg-405.

This sequence belongs to the MurCDEF family. MurE subfamily. Requires Mg(2+) as cofactor. Post-translationally, carboxylation is probably crucial for Mg(2+) binding and, consequently, for the gamma-phosphate positioning of ATP.

Its subcellular location is the cytoplasm. It carries out the reaction UDP-N-acetyl-alpha-D-muramoyl-L-alanyl-D-glutamate + meso-2,6-diaminopimelate + ATP = UDP-N-acetyl-alpha-D-muramoyl-L-alanyl-gamma-D-glutamyl-meso-2,6-diaminopimelate + ADP + phosphate + H(+). The protein operates within cell wall biogenesis; peptidoglycan biosynthesis. In terms of biological role, catalyzes the addition of meso-diaminopimelic acid to the nucleotide precursor UDP-N-acetylmuramoyl-L-alanyl-D-glutamate (UMAG) in the biosynthesis of bacterial cell-wall peptidoglycan. The protein is UDP-N-acetylmuramoyl-L-alanyl-D-glutamate--2,6-diaminopimelate ligase of Cytophaga hutchinsonii (strain ATCC 33406 / DSM 1761 / CIP 103989 / NBRC 15051 / NCIMB 9469 / D465).